A 290-amino-acid polypeptide reads, in one-letter code: MFKGSIVAIVTPFNNGAVDEKKLRELVDFQIENGTDAIVACGTTGESSTLDNEEHLNVIKIVFDQAKGRVPVIAGTGSNSTAEAIHLTREAKEIGVAGVLLVTPYYNKPTQEGLYLHYTAIADAVEIPQILYNVPGRTGVNLLPETVARLAGHKNIVAIKEATGSLQQASEVMALCGDQIDVFSGDDFITFPMMACGAKGVISVTANIMPKAIGDLTDAFYAGDLEKARQLHLDTLKISNAMFIESNPVPVKTALALMGKCSDEVRLPLAPMSAANKAKLEAIMKEYKLI.

Thr44 serves as a coordination point for pyruvate. Catalysis depends on Tyr132, which acts as the Proton donor/acceptor. The active-site Schiff-base intermediate with substrate is the Lys160. Ile202 lines the pyruvate pocket.

Belongs to the DapA family. Homotetramer; dimer of dimers.

The protein localises to the cytoplasm. It catalyses the reaction L-aspartate 4-semialdehyde + pyruvate = (2S,4S)-4-hydroxy-2,3,4,5-tetrahydrodipicolinate + H2O + H(+). It participates in amino-acid biosynthesis; L-lysine biosynthesis via DAP pathway; (S)-tetrahydrodipicolinate from L-aspartate: step 3/4. In terms of biological role, catalyzes the condensation of (S)-aspartate-beta-semialdehyde [(S)-ASA] and pyruvate to 4-hydroxy-tetrahydrodipicolinate (HTPA). The chain is 4-hydroxy-tetrahydrodipicolinate synthase from Trichlorobacter lovleyi (strain ATCC BAA-1151 / DSM 17278 / SZ) (Geobacter lovleyi).